The chain runs to 65 residues: Large ribosomal subunit protein bL35 (65 aa).

The protein belongs to the bacterial ribosomal protein bL35 family.

In Prochlorococcus marinus (strain MIT 9313), this protein is Large ribosomal subunit protein bL35.